Consider the following 409-residue polypeptide: Elongation factor Tu (409 aa).

One can recognise a tr-type G domain in the interval 10–214 (KPHVNIGTIG…AVDSYIPDPE (205 aa)). Positions 19–26 (GHVDHGKT) are G1. 19 to 26 (GHVDHGKT) contacts GTP. T26 is a binding site for Mg(2+). Residues 60-64 (GITIN) form a G2 region. The interval 81 to 84 (DCPG) is G3. GTP is bound by residues 81 to 85 (DCPGH) and 136 to 139 (NKED). Residues 136-139 (NKED) form a G4 region. The interval 174-176 (SGL) is G5.

Belongs to the TRAFAC class translation factor GTPase superfamily. Classic translation factor GTPase family. EF-Tu/EF-1A subfamily. Monomer.

It is found in the cytoplasm. It carries out the reaction GTP + H2O = GDP + phosphate + H(+). In terms of biological role, GTP hydrolase that promotes the GTP-dependent binding of aminoacyl-tRNA to the A-site of ribosomes during protein biosynthesis. The chain is Elongation factor Tu from Trichormus variabilis (strain ATCC 29413 / PCC 7937) (Anabaena variabilis).